The following is a 192-amino-acid chain: Capsid protein (192 aa).

The disordered stretch occupies residues 1–30 (MEDSQPIKVRQPSISAPGTHLSPNPGQQSP). A compositionally biased stretch (polar residues) spans 12 to 30 (PSISAPGTHLSPNPGQQSP).

This sequence belongs to the tymoviruses capsid protein family.

It is found in the virion. Its function is as follows. Self-assembles to form a T=3 icosahedral capsid composed of 180 copies of the capsid protein. The capsid encapsulates the single-stranded RNA genome. This is Capsid protein from Ononis.